Here is a 186-residue protein sequence, read N- to C-terminus: Peptidyl-tRNA hydrolase (186 aa).

A tRNA-binding site is contributed by Tyr14. The Proton acceptor role is filled by His19. Residues Phe65, Asn67, and Asn113 each coordinate tRNA.

The protein belongs to the PTH family. Monomer.

The protein resides in the cytoplasm. It carries out the reaction an N-acyl-L-alpha-aminoacyl-tRNA + H2O = an N-acyl-L-amino acid + a tRNA + H(+). Its function is as follows. Hydrolyzes ribosome-free peptidyl-tRNAs (with 1 or more amino acids incorporated), which drop off the ribosome during protein synthesis, or as a result of ribosome stalling. In terms of biological role, catalyzes the release of premature peptidyl moieties from peptidyl-tRNA molecules trapped in stalled 50S ribosomal subunits, and thus maintains levels of free tRNAs and 50S ribosomes. In Limosilactobacillus reuteri (strain DSM 20016) (Lactobacillus reuteri), this protein is Peptidyl-tRNA hydrolase.